We begin with the raw amino-acid sequence, 324 residues long: Phospho-N-acetylmuramoyl-pentapeptide-transferase (324 aa).

The next 10 helical transmembrane spans lie at 5-25, 50-70, 77-97, 117-137, 147-167, 176-196, 203-223, 227-247, 250-270, and 302-322; these read VILFTILMGFLISVLLSPILI, GTPTMGGVMIILSIIVTTIVM, ISPEMVLLLFVTLGYGLLGFL, LIGQIIIAVVFYAVYHYYNFA, LSFDLGWAYFILVLFMLVGGS, LDGLLSGTAAIAFGAFAILAW, VAIFSVAVVGAVLGFLVFNAH, VFMGDTGSLALGGAIVTIAIL, LEILLVIIGGVFVIETLSVIL, and VVVTFWAAGLLLAVLGIYIEV.

The protein belongs to the glycosyltransferase 4 family. MraY subfamily. The cofactor is Mg(2+).

It is found in the cell membrane. It carries out the reaction UDP-N-acetyl-alpha-D-muramoyl-L-alanyl-gamma-D-glutamyl-meso-2,6-diaminopimeloyl-D-alanyl-D-alanine + di-trans,octa-cis-undecaprenyl phosphate = di-trans,octa-cis-undecaprenyl diphospho-N-acetyl-alpha-D-muramoyl-L-alanyl-D-glutamyl-meso-2,6-diaminopimeloyl-D-alanyl-D-alanine + UMP. It functions in the pathway cell wall biogenesis; peptidoglycan biosynthesis. Catalyzes the initial step of the lipid cycle reactions in the biosynthesis of the cell wall peptidoglycan: transfers peptidoglycan precursor phospho-MurNAc-pentapeptide from UDP-MurNAc-pentapeptide onto the lipid carrier undecaprenyl phosphate, yielding undecaprenyl-pyrophosphoryl-MurNAc-pentapeptide, known as lipid I. This Bacillus subtilis (strain 168) protein is Phospho-N-acetylmuramoyl-pentapeptide-transferase.